Reading from the N-terminus, the 161-residue chain is V-type proton ATPase 16 kDa proteolipid subunit c (161 aa).

The Lumenal portion of the chain corresponds to 1–15; that stretch reads MSYDLATAERAAYAP. A helical transmembrane segment spans residues 16–36; that stretch reads FFGYMGAASAQIFTVLGAAYG. Residues 37 to 58 are Cytoplasmic-facing; it reads TAKSAVGISSMGVMRPELIMKS. Residues 59 to 79 traverse the membrane as a helical segment; that stretch reads VIPVIMAGIIGIYGLVVAMVL. The Lumenal portion of the chain corresponds to 80–98; that stretch reads RGKVTSASAGYTLDKGFAH. Residues 99-119 traverse the membrane as a helical segment; that stretch reads LAAGLTCGLCGLGAGYAIGIV. The Cytoplasmic segment spans residues 120-137; the sequence is GDAGVRGTAQQPRLFVGM. A helical membrane pass occupies residues 138-158; that stretch reads ILILIFSEVLGLYGMIVALIL. At 159-161 the chain is on the lumenal side; sequence GTS.

This sequence belongs to the V-ATPase proteolipid subunit family. V-ATPase is a heteromultimeric enzyme made up of two complexes: the ATP-hydrolytic V1 complex and the proton translocation V0 complex. The V1 complex consists of three catalytic AB heterodimers that form a heterohexamer, three peripheral stalks each consisting of EG heterodimers, one central rotor including subunits D and F, and the regulatory subunits C and H. The proton translocation complex V0 consists of the proton transport subunit a, a ring of proteolipid subunits c9c'', rotary subunit d, subunits e and f, and the accessory subunits vah-19/Ac45 and vah-20/PRR.

The protein localises to the membrane. In terms of biological role, proton-conducting pore forming subunit of the V0 complex of vacuolar(H+)-ATPase (V-ATPase), a multisubunit enzyme composed of a peripheral complex (V1) that hydrolyzes ATP and a membrane integral complex (V0) that translocates protons. V-ATPase is responsible for acidifying and maintaining the pH of intracellular compartments and in some cell types, is targeted to the plasma membrane, where it is responsible for acidifying the extracellular environment. This is V-type proton ATPase 16 kDa proteolipid subunit c (12) from Ascaris suum (Pig roundworm).